The following is a 164-amino-acid chain: 4-hydroxy-4-methyl-2-oxoglutarate aldolase (164 aa).

Substrate-binding positions include 74 to 77 and Arg-96; that span reads GGNL. Position 97 (Asp-97) interacts with a divalent metal cation.

It belongs to the class II aldolase/RraA-like family. As to quaternary structure, homotrimer. Ni(2+) is required as a cofactor. The cofactor is Co(2+). It depends on Zn(2+) as a cofactor.

The catalysed reaction is 4-hydroxy-4-methyl-2-oxoglutarate = 2 pyruvate. It carries out the reaction oxaloacetate + H(+) = pyruvate + CO2. With respect to regulation, competitively inhibited by oxalate, a pyruvate enolate analog. Its function is as follows. Catalyzes the aldol cleavage of 4-hydroxy-4-methyl-2-oxoglutarate (HMG) into 2 molecules of pyruvate. Also contains a secondary oxaloacetate (OAA) decarboxylase activity due to the common pyruvate enolate transition state formed following C-C bond cleavage in the retro-aldol and decarboxylation reactions. In Thermus thermophilus (strain ATCC 27634 / DSM 579 / HB8), this protein is 4-hydroxy-4-methyl-2-oxoglutarate aldolase.